Consider the following 374-residue polypeptide: Aminomethyltransferase (374 aa).

The protein belongs to the GcvT family. The glycine cleavage system is composed of four proteins: P, T, L and H.

It carries out the reaction N(6)-[(R)-S(8)-aminomethyldihydrolipoyl]-L-lysyl-[protein] + (6S)-5,6,7,8-tetrahydrofolate = N(6)-[(R)-dihydrolipoyl]-L-lysyl-[protein] + (6R)-5,10-methylene-5,6,7,8-tetrahydrofolate + NH4(+). Its function is as follows. The glycine cleavage system catalyzes the degradation of glycine. This is Aminomethyltransferase from Prochlorococcus marinus (strain MIT 9303).